The chain runs to 75 residues: Putative DNA-directed RNA polymerase subunit omega (75 aa).

Belongs to the RNA polymerase subunit omega family.

Its subcellular location is the plastid. It localises to the chloroplast. The catalysed reaction is RNA(n) + a ribonucleoside 5'-triphosphate = RNA(n+1) + diphosphate. May be involved in RNA polymerase activity. This chain is Putative DNA-directed RNA polymerase subunit omega, found in Pyropia yezoensis (Susabi-nori).